The following is a 782-amino-acid chain: DnaJ homolog subfamily C member 16 (782 aa).

The first 25 residues, 1–25 (MEVRKLSISWQFLIVLVLILQILSA), serve as a signal peptide directing secretion. Residues 26-535 (LDFDPYKVLG…DSIFHNNWRE (510 aa)) are Cytoplasmic-facing. The J domain maps to 29–93 (DPYKVLGVSR…EKRSNYDQYG (65 aa)). The 129-residue stretch at 119–247 (FYFDESFFHF…LRQFVESLLP (129 aa)) folds into the Thioredoxin domain. A helical; Anchor for type IV membrane protein membrane pass occupies residues 536–556 (MMPLLSLIFSALFILFGTVIV). Residues 557 to 782 (QAFSDSSDER…FYIPSWPELD (226 aa)) are Extracellular-facing. The tract at residues 562–593 (SSDERESSPPDKEEAQEKTGKTEPSFTKENSS) is disordered. Residues 563–582 (SDERESSPPDKEEAQEKTGK) are compositionally biased toward basic and acidic residues. The segment covering 583-593 (TEPSFTKENSS) has biased composition (polar residues). An N-linked (GlcNAc...) asparagine glycan is attached at Asn-631.

It localises to the endoplasmic reticulum membrane. In terms of biological role, plays an important role in regulating the size of autophagosomes during the formation process. This Pongo abelii (Sumatran orangutan) protein is DnaJ homolog subfamily C member 16 (DNAJC16).